A 480-amino-acid polypeptide reads, in one-letter code: Protein nucleotidyltransferase YdiU (480 aa).

ATP is bound by residues Gly-86, Gly-88, Arg-89, Lys-109, Asp-121, Gly-122, Arg-172, and Arg-179. Asp-248 acts as the Proton acceptor in catalysis. Residues Asn-249 and Asp-258 each contribute to the Mg(2+) site. Asp-258 serves as a coordination point for ATP.

This sequence belongs to the SELO family. Mg(2+) is required as a cofactor. The cofactor is Mn(2+).

It catalyses the reaction L-seryl-[protein] + ATP = 3-O-(5'-adenylyl)-L-seryl-[protein] + diphosphate. The catalysed reaction is L-threonyl-[protein] + ATP = 3-O-(5'-adenylyl)-L-threonyl-[protein] + diphosphate. The enzyme catalyses L-tyrosyl-[protein] + ATP = O-(5'-adenylyl)-L-tyrosyl-[protein] + diphosphate. It carries out the reaction L-histidyl-[protein] + UTP = N(tele)-(5'-uridylyl)-L-histidyl-[protein] + diphosphate. It catalyses the reaction L-seryl-[protein] + UTP = O-(5'-uridylyl)-L-seryl-[protein] + diphosphate. The catalysed reaction is L-tyrosyl-[protein] + UTP = O-(5'-uridylyl)-L-tyrosyl-[protein] + diphosphate. Nucleotidyltransferase involved in the post-translational modification of proteins. It can catalyze the addition of adenosine monophosphate (AMP) or uridine monophosphate (UMP) to a protein, resulting in modifications known as AMPylation and UMPylation. This chain is Protein nucleotidyltransferase YdiU, found in Salmonella choleraesuis (strain SC-B67).